Reading from the N-terminus, the 159-residue chain is Aphid transmission protein (159 aa).

The protein belongs to the caulimoviridae ORF II family.

This protein is involved in virus transmission. In Cauliflower mosaic virus (strain CM-1841) (CaMV), this protein is Aphid transmission protein.